Here is an 813-residue protein sequence, read N- to C-terminus: Receptor-like protein 48 (813 aa).

Residues 1–30 form the signal peptide; the sequence is MHSCSERRMMTVIWSLCLIFCLSNSILAIA. Topologically, residues 31 to 786 are extracellular; that stretch reads KDLCLPDQRD…EDEEKEEKNQ (756 aa). Asn69, Asn105, and Asn123 each carry an N-linked (GlcNAc...) asparagine glycan. LRR repeat units follow at residues 111–134, 136–159, and 160–182; these read LQHLQSLELSSNNISGILPDSIGN, KYLRSLSFRTCHLFGKIPSSLGSL, and SYLTHLDLSYNDFTSEGPDSGGN. Residues Asn195 and Asn216 are each glycosylated (N-linked (GlcNAc...) asparagine). 21 LRR repeats span residues 196–219, 220–244, 245–260, 261–285, 288–310, 311–335, 336–359, 361–381, 382–405, 406–432, 434–450, 451–473, 475–498, 500–521, 523–544, 545–571, 572–595, 642–666, 667–690, 691–714, and 716–739; these read LSSVTWIDLGSNQLKGMLPSNMSS, LSKLVSFDISENSFSGSIPSSLFMI, PSLNFSGPLEIGNISS, HSELGYLYMGENNFNGPIPGSLSKL, LRDLSLSFWNTGRGIVDFSIFLH, LKSLCSLDLSYLNTRSMVDLSFFSH, LMSLDELDLSGINLKISSTLSFPS, TGTLILASCNIVEFPKFLENQ, TSLFYLDISANHIEGQVPEWLWRL, PTLSFVNIAQNSFSGELPMLPNSIYSF, ASDNQFSGEIPRTVCEL, VSLNTLVLSNNKFSGSIPRCFEN, KTISILHLRNNSLSGVFPKEIISE, LTSLDVGHNWLSGQLPKSLIKC, DLEFLNVEDNRINDKFPFWLRS, LSNLQILVLRSNEFYGPIFSLEDSLSF, PKLRIFDISENHFTGVLPSDYFAG, FTIYKTIDVSGNRLEGDIPESIGIL, KELIVLNMSNNAFTGHIPPSLSNL, SNLQSLDLSQNRLSGSIPPELGKL, and FLEWMNFSYNRLEGPIPQATQIQS. N-linked (GlcNAc...) asparagine glycans are attached at residues Asn248 and Asn257. A glycan (N-linked (GlcNAc...) asparagine) is linked at Asn380. N-linked (GlcNAc...) asparagine glycosylation is present at Asn484. N-linked (GlcNAc...) asparagine glycans are attached at residues Asn673 and Asn689. Residues Asn721 and Asn741 are each glycosylated (N-linked (GlcNAc...) asparagine). A disordered region spans residues 756–785; it reads FLNKCGGEEEEEEEATKQEEDEDEEKEEKN. Residues 763–781 are compositionally biased toward acidic residues; sequence EEEEEEEATKQEEDEDEEK. A helical transmembrane segment spans residues 787 to 807; the sequence is VFSWIAAAIGYVPGVFCGLTI. Topologically, residues 808–813 are cytoplasmic; sequence AHILTS.

The protein belongs to the RLP family.

It localises to the cell membrane. Plays a role in root hair development. The sequence is that of Receptor-like protein 48 from Arabidopsis thaliana (Mouse-ear cress).